Consider the following 579-residue polypeptide: Fatty-acid amide hydrolase 1 (579 aa).

Residues 9–29 form a helical membrane-spanning segment; the sequence is ALSGLSGVCLACSLLSAAVVL. At 30 to 403 the chain is on the cytoplasmic side; sequence RWTRSQTARG…GDFVDPCLGD (374 aa). K142 acts as the Charge relay system in catalysis. Residues M191, S217, and 238-241 each bind substrate; that span reads IGGS. The active-site Charge relay system is the S217. S241 serves as the catalytic Acyl-ester intermediate. The residue at position 241 (S241) is a Phosphoserine. The stretch at 404 to 433 is an intramembrane region; sequence LVLVLKLPRWFKKLLSFLLKPLFPRLAAFL. Residues 434–579 lie on the Cytoplasmic side of the membrane; that stretch reads NSMCPRSAEK…RLMTPEKRPS (146 aa).

It belongs to the amidase family. In terms of assembly, homodimer.

The protein localises to the endoplasmic reticulum membrane. The protein resides in the golgi apparatus membrane. The enzyme catalyses N-(5Z,8Z,11Z,14Z-eicosatetraenoyl)-ethanolamine + H2O = ethanolamine + (5Z,8Z,11Z,14Z)-eicosatetraenoate. The catalysed reaction is (9Z)-octadecenamide + H2O = (9Z)-octadecenoate + NH4(+). It carries out the reaction 2-(5Z,8Z,11Z,14Z-eicosatetraenoyl)-glycerol + H2O = glycerol + (5Z,8Z,11Z,14Z)-eicosatetraenoate + H(+). It catalyses the reaction N-(9Z-hexadecenoyl) ethanolamine + H2O = (9Z)-hexadecenoate + ethanolamine. The enzyme catalyses N-(9Z-octadecenoyl) ethanolamine + H2O = ethanolamine + (9Z)-octadecenoate. The catalysed reaction is N-octadecanoyl ethanolamine + H2O = octadecanoate + ethanolamine. It carries out the reaction N-docosanoyl-ethanolamine + H2O = docosanoate + ethanolamine. It catalyses the reaction N-tetracosanoyl-taurine + H2O = tetracosanoate + taurine. The enzyme catalyses N-(15Z-tetracosenoyl)-ethanolamine + H2O = (15Z)-tetracosenoate + ethanolamine. The catalysed reaction is N-(9Z-octadecenoyl)-taurine + H2O = taurine + (9Z)-octadecenoate. It carries out the reaction N-docosanoyl-taurine + H2O = docosanoate + taurine. It catalyses the reaction N-(15Z-tetracosenoyl)-taurine + H2O = (15Z)-tetracosenoate + taurine. The enzyme catalyses N-tricosanoyl-taurine + H2O = tricosanoate + taurine. The catalysed reaction is (9Z,12Z,15Z)-octadecatrienamide + H2O = (9Z,12Z,15Z)-octadecatrienoate + NH4(+). It carries out the reaction (5Z,8Z,11Z,14Z)-eicosatetraenamide + H2O = (5Z,8Z,11Z,14Z)-eicosatetraenoate + NH4(+). It catalyses the reaction (6Z)-octadecenamide + H2O = (6Z)-octadecenoate + NH4(+). The enzyme catalyses (15Z)-tetracosenamide + H2O = (15Z)-tetracosenoate + NH4(+). The catalysed reaction is (8Z,11Z,14Z)-eicosatrienamide + H2O = (8Z,11Z,14Z)-eicosatrienoate + NH4(+). It carries out the reaction (11Z,14Z,17Z)-eicosatrienamide + H2O = (11Z,14Z,17Z)-eicosatrienoate + NH4(+). It catalyses the reaction (11Z,14Z)-eicosadienamide + H2O = (11Z,14Z)-eicosadienoate + NH4(+). The enzyme catalyses (9Z,12Z)-octadecadienamide + H2O = (9Z,12Z)-octadecadienoate + NH4(+). The catalysed reaction is tetradecamide + H2O = tetradecanoate + NH4(+). It carries out the reaction 1-O-methyl-(5Z,8Z,11Z,14Z)-eicosatetraenoate + H2O = methanol + (5Z,8Z,11Z,14Z)-eicosatetraenoate + H(+). It catalyses the reaction (11Z)-eicosenamide + H2O = (11Z)-eicosenoate + NH4(+). The enzyme catalyses (9Z)-octadecenoate + glycine = N-(9Z-octadecenoyl)glycine + H2O. The catalysed reaction is N-(5Z,8Z,11Z,14Z)-eicosatetraenoyl-glycine + H2O = (5Z,8Z,11Z,14Z)-eicosatetraenoate + glycine. It carries out the reaction N-(5Z,8Z,11Z,14Z-eicosatetraenoyl)-L-serine + H2O = (5Z,8Z,11Z,14Z)-eicosatetraenoate + L-serine. Inhibited the trifluoromethyl compound PF-3845. Functionally, catalyzes the hydrolysis of endogenous amidated lipids like the endocannabinoid anandamide (N-(5Z,8Z,11Z,14Z-eicosatetraenoyl)-ethanolamine), as well as other fatty amides such as the taurine-conjugated fatty acids (a structural class of central nervous system (CNS) metabolites), to their corresponding fatty acids, thereby regulating the signaling functions of these molecules. FAAH cooperates with PM20D1 in the hydrolysis of amino acid-conjugated fatty acids such as N-fatty acyl glycine and N-fatty acyl-L-serine, thereby acting as a physiological regulator of specific subsets of intracellular, but not of extracellular, N-fatty acyl amino acids. It can also catalyze the hydrolysis of the endocannabinoid 2-arachidonoylglycerol (2-(5Z,8Z,11Z,14Z-eicosatetraenoyl)-glycerol). This Mus musculus (Mouse) protein is Fatty-acid amide hydrolase 1 (Faah).